A 147-amino-acid chain; its full sequence is Nucleoside diphosphate kinase (147 aa).

Residues Lys9, Arg85, Thr91, Arg102, and Asn112 each coordinate ATP. Residue His115 is the Pros-phosphohistidine intermediate of the active site.

It belongs to the NDK family. It depends on Mg(2+) as a cofactor.

It carries out the reaction a 2'-deoxyribonucleoside 5'-diphosphate + ATP = a 2'-deoxyribonucleoside 5'-triphosphate + ADP. It catalyses the reaction a ribonucleoside 5'-diphosphate + ATP = a ribonucleoside 5'-triphosphate + ADP. Its function is as follows. Major role in the synthesis of nucleoside triphosphates other than ATP. The ATP gamma phosphate is transferred to the NDP beta phosphate via a ping-pong mechanism, using a phosphorylated active-site intermediate. The polypeptide is Nucleoside diphosphate kinase (NDK1) (Encephalitozoon cuniculi (strain GB-M1) (Microsporidian parasite)).